Reading from the N-terminus, the 96-residue chain is Co-chaperonin GroES (96 aa).

It belongs to the GroES chaperonin family. In terms of assembly, heptamer of 7 subunits arranged in a ring. Interacts with the chaperonin GroEL.

It is found in the cytoplasm. In terms of biological role, together with the chaperonin GroEL, plays an essential role in assisting protein folding. The GroEL-GroES system forms a nano-cage that allows encapsulation of the non-native substrate proteins and provides a physical environment optimized to promote and accelerate protein folding. GroES binds to the apical surface of the GroEL ring, thereby capping the opening of the GroEL channel. The polypeptide is Co-chaperonin GroES (Shewanella baltica (strain OS223)).